We begin with the raw amino-acid sequence, 601 residues long: Elongation factor 4 (601 aa).

In terms of domain architecture, tr-type G spans 5–187 (EHIRNFSIIA…AIVERLPAPE (183 aa)). GTP is bound by residues 17 to 22 (DHGKST) and 134 to 137 (NKID).

Belongs to the TRAFAC class translation factor GTPase superfamily. Classic translation factor GTPase family. LepA subfamily.

The protein resides in the cell inner membrane. The enzyme catalyses GTP + H2O = GDP + phosphate + H(+). Functionally, required for accurate and efficient protein synthesis under certain stress conditions. May act as a fidelity factor of the translation reaction, by catalyzing a one-codon backward translocation of tRNAs on improperly translocated ribosomes. Back-translocation proceeds from a post-translocation (POST) complex to a pre-translocation (PRE) complex, thus giving elongation factor G a second chance to translocate the tRNAs correctly. Binds to ribosomes in a GTP-dependent manner. The polypeptide is Elongation factor 4 (Nitratidesulfovibrio vulgaris (strain ATCC 29579 / DSM 644 / CCUG 34227 / NCIMB 8303 / VKM B-1760 / Hildenborough) (Desulfovibrio vulgaris)).